A 219-amino-acid chain; its full sequence is Holliday junction branch migration complex subunit RuvA (219 aa).

The tract at residues 1-66 is domain I; sequence MIEYIIGKIS…NFLFEYYGFK (66 aa). Residues 67-148 form a domain II region; the sequence is TLREKIFFEN…SEYNNDVNHS (82 aa). The flexible linker stretch occupies residues 149 to 154; sequence SINQQS. Residues 155 to 219 form a domain III region; sequence NSYNPVPDLV…EAVTNKTTVS (65 aa).

This sequence belongs to the RuvA family. As to quaternary structure, homotetramer. Forms an RuvA(8)-RuvB(12)-Holliday junction (HJ) complex. HJ DNA is sandwiched between 2 RuvA tetramers; dsDNA enters through RuvA and exits via RuvB. An RuvB hexamer assembles on each DNA strand where it exits the tetramer. Each RuvB hexamer is contacted by two RuvA subunits (via domain III) on 2 adjacent RuvB subunits; this complex drives branch migration. In the full resolvosome a probable DNA-RuvA(4)-RuvB(12)-RuvC(2) complex forms which resolves the HJ.

It is found in the cytoplasm. The RuvA-RuvB-RuvC complex processes Holliday junction (HJ) DNA during genetic recombination and DNA repair, while the RuvA-RuvB complex plays an important role in the rescue of blocked DNA replication forks via replication fork reversal (RFR). RuvA specifically binds to HJ cruciform DNA, conferring on it an open structure. The RuvB hexamer acts as an ATP-dependent pump, pulling dsDNA into and through the RuvAB complex. HJ branch migration allows RuvC to scan DNA until it finds its consensus sequence, where it cleaves and resolves the cruciform DNA. The protein is Holliday junction branch migration complex subunit RuvA of Malacoplasma penetrans (strain HF-2) (Mycoplasma penetrans).